A 312-amino-acid chain; its full sequence is Glyoxylate/hydroxypyruvate reductase A (312 aa).

Arg-227 is a catalytic residue. His-275 acts as the Proton donor in catalysis.

The protein belongs to the D-isomer specific 2-hydroxyacid dehydrogenase family. GhrA subfamily.

It is found in the cytoplasm. It catalyses the reaction glycolate + NADP(+) = glyoxylate + NADPH + H(+). The catalysed reaction is (R)-glycerate + NAD(+) = 3-hydroxypyruvate + NADH + H(+). The enzyme catalyses (R)-glycerate + NADP(+) = 3-hydroxypyruvate + NADPH + H(+). In terms of biological role, catalyzes the NADPH-dependent reduction of glyoxylate and hydroxypyruvate into glycolate and glycerate, respectively. This is Glyoxylate/hydroxypyruvate reductase A from Escherichia fergusonii (strain ATCC 35469 / DSM 13698 / CCUG 18766 / IAM 14443 / JCM 21226 / LMG 7866 / NBRC 102419 / NCTC 12128 / CDC 0568-73).